The sequence spans 735 residues: Transcription factor sphG (735 aa).

The zn(2)-C6 fungal-type DNA-binding region spans 13 to 40; sequence CDQCRARKIRCSREKPSCRNCGRLGLQC. The segment at 89–110 is disordered; it reads TISPSARCPASPASPSPRLSDK. The segment covering 91–106 has biased composition (low complexity); that stretch reads SPSARCPASPASPSPR.

Its subcellular location is the nucleus. Functionally, transcription factor that regulates the expression of the gene cluster that mediates the biosynthesis of sphingofungins, bioactive molecules acting as sphingolipid inhibitors via inhibiting serine palmitoyl transferase (SPT). The protein is Transcription factor sphG of Aspergillus fumigatus (strain CBS 144.89 / FGSC A1163 / CEA10) (Neosartorya fumigata).